Reading from the N-terminus, the 323-residue chain is Thioredoxin reductase (323 aa).

Residue 42 to 49 (YRAEADGA) coordinates FAD. Cysteine 143 and cysteine 146 form a disulfide bridge. An FAD-binding site is contributed by 286-295 (DVLCNEVKQA).

Belongs to the class-II pyridine nucleotide-disulfide oxidoreductase family. As to quaternary structure, homodimer. FAD is required as a cofactor.

The protein resides in the cytoplasm. The catalysed reaction is [thioredoxin]-dithiol + NADP(+) = [thioredoxin]-disulfide + NADPH + H(+). The chain is Thioredoxin reductase (trxB) from Aquifex aeolicus (strain VF5).